Consider the following 145-residue polypeptide: AP-2 complex subunit sigma (145 aa).

The protein belongs to the adaptor complexes small subunit family. As to quaternary structure, adaptor protein complex 2 (AP-2) is a heterotetramer composed of two large adaptins (alpha-type subunit apl3 and beta-type subunit apl1), a medium chain (mu-type subunit apm4) and a small adaptin (sigma-type subunit aps2).

Its subcellular location is the cell membrane. It localises to the membrane. The protein localises to the coated pit. In terms of biological role, component of the adaptor complexes which link clathrin to receptors in coated vesicles. Clathrin-associated protein complexes are believed to interact with the cytoplasmic tails of membrane proteins, leading to their selection and concentration. In Aspergillus fumigatus (strain ATCC MYA-4609 / CBS 101355 / FGSC A1100 / Af293) (Neosartorya fumigata), this protein is AP-2 complex subunit sigma (aps2).